We begin with the raw amino-acid sequence, 192 residues long: Urease accessory protein UreE (192 aa).

Residues 170-192 (EHHGHSHSHSHDHVHDEKCGHKH) form a disordered region. The segment covering 178–192 (HSHDHVHDEKCGHKH) has biased composition (basic and acidic residues).

This sequence belongs to the UreE family.

The protein localises to the cytoplasm. Functionally, involved in urease metallocenter assembly. Binds nickel. Probably functions as a nickel donor during metallocenter assembly. This is Urease accessory protein UreE from Cupriavidus necator (strain ATCC 17699 / DSM 428 / KCTC 22496 / NCIMB 10442 / H16 / Stanier 337) (Ralstonia eutropha).